The chain runs to 149 residues: Vesicle-associated protein 3-1 (149 aa).

Methionine 1 is subject to N-acetylmethionine. Serine 2 carries the N-acetylserine; in Vesicle-associated protein 3-1, N-terminally processed modification. The MSP domain occupies 6 to 126 (LLEIEPMYLQ…EETKLRVTYV (121 aa)).

This sequence belongs to the VAMP-associated protein (VAP) (TC 9.B.17) family.

Functionally, may play a role in vesicle trafficking. In Arabidopsis thaliana (Mouse-ear cress), this protein is Vesicle-associated protein 3-1 (PVA31).